The sequence spans 312 residues: Olfactory receptor 1D5 (312 aa).

Residues 1–25 (MDGDNQSENSQFLLLGISESPEQQQ) are Extracellular-facing. Asn-5 is a glycosylation site (N-linked (GlcNAc...) asparagine). The chain crosses the membrane as a helical span at residues 26-49 (ILFWMFLSMYLVTVLGNVLIILAI). At 50 to 57 (SSDSRLHT) the chain is on the cytoplasmic side. A helical transmembrane segment spans residues 58 to 79 (PMYFFLANLSFTDLFFVTNTIP). At 80–100 (KMLVNLQSQNKAISYAGCLTQ) the chain is on the extracellular side. The cysteines at positions 97 and 189 are disulfide-linked. A helical membrane pass occupies residues 101–120 (LYFLVSLVTLDNLILAVMAY). Over 121–140 (DRYVAICCPLHYVTAMSPGL) the chain is Cytoplasmic. Residues 141–158 (CVLLLSLCWGLSVFYGLL) traverse the membrane as a helical segment. At 159–196 (LTLLLTRVTFCGPREIHYLFCDMYILLRLACSNTHIIH) the chain is on the extracellular side. The chain crosses the membrane as a helical span at residues 197 to 220 (TVLVATGCFIFLTPLGFMTTSYVR). The Cytoplasmic portion of the chain corresponds to 221–237 (IVRTILQIPSASKKYKA). A helical membrane pass occupies residues 238 to 260 (FSTCASHLGVVSLFYGTLAMVYL). The Extracellular portion of the chain corresponds to 261-271 (QPLHTYSMKDS). The chain crosses the membrane as a helical span at residues 272-291 (VATVMYAVVTPMMNPFIHSL). At 292 to 312 (RNKDMHGALGRVLRRLFQRPK) the chain is on the cytoplasmic side.

Belongs to the G-protein coupled receptor 1 family.

The protein resides in the cell membrane. Functionally, odorant receptor. This is Olfactory receptor 1D5 (OR1D5) from Pan troglodytes (Chimpanzee).